Here is a 706-residue protein sequence, read N- to C-terminus: Choline transporter-like protein 2 (706 aa).

Topologically, residues 1–33 (MGKDSQNYYGKHGTPQKYDPTFKGPIYNRGCTD) are cytoplasmic. T14 is modified (phosphothreonine). A helical transmembrane segment spans residues 34 to 54 (VICCVLLFLAIVGYVAVGIIA). At 55-232 (WTHGDPRKVI…QIFEDYTVSW (178 aa)) the chain is on the extracellular side. N-linked (GlcNAc...) asparagine glycans are attached at residues N187 and N200. The chain crosses the membrane as a helical span at residues 233-253 (YWIIIGLVIAMVLSLLFIVLL). The Cytoplasmic segment spans residues 254 to 256 (RFL). Residues 257–277 (AGIMVWVMIVMVILVLGYGIF) traverse the membrane as a helical segment. At 278–315 (HCYMEYSRLRGEAGSDVSLVDLGFQTDLRVYLHLRQTW) the chain is on the extracellular side. A helical transmembrane segment spans residues 316–336 (MAFMIILSILEVVIILLLIFL). Residues 337–364 (RKRILIAIALIKEASRAVGHVMCSLLYP) lie on the Cytoplasmic side of the membrane. A helical membrane pass occupies residues 365–385 (LVTFFLLCLCIAYWASTSVFL). At 386-454 (STSNTAVYKV…LQIFNAFMFF (69 aa)) the chain is on the extracellular side. The N-linked (GlcNAc...) asparagine glycan is linked to N417. A helical transmembrane segment spans residues 455-477 (WLANFVLALGQVTLAGAFASYYW). Residues 478-504 (AMRKPDDMPAFPLFSAFGRALRYHTGS) are Cytoplasmic-facing. A helical transmembrane segment spans residues 505 to 525 (LAFGSLILAIVQIIRVMLEYL). The Extracellular segment spans residues 526-563 (DQRLKAAQNKFAKFLMVCLKCCFWCLEKFIKFLNRNAY). Residues 564–584 (IMIAIYGTNFCTSARNAFFLL) form a helical membrane-spanning segment. Residues 585-599 (MRNIIRVAVLDKVTD) are Cytoplasmic-facing. A helical transmembrane segment spans residues 600 to 620 (FLFLLGKLLIVGSVGILAFFF). Over 621-638 (FTHRIRIVQDTAPPLNYY) the chain is Extracellular. Residues 639–659 (WVPILTVIIGSYLIAHGFFSV) traverse the membrane as a helical segment. Topologically, residues 660–706 (YGMCVDTLFLCFLEDLERNDGSAERPYFMSSTLKKLLNKTNKKVAES) are cytoplasmic.

Belongs to the CTL (choline transporter-like) family. As to quaternary structure, interacts with COCH. Glycosylated, glycosylation differs from tissue to tissue. The molecular mass of the mature glycosylated protein is highest in kidney, followed by lung, colon and spleen, then brain and tongue. In terms of tissue distribution, expressed at high levels in lung, colon, inner ear and spleen (at protein level). Progressively lower levels in brain, tongue, liver and kidney (at protein level). In the kidney, prominent expression in glomeruli in the lining of Bowman's capsule and on the mesangial cells adjacent to the vessels within the glomerulus (at protein level). Strongly expressed on the membranes of splenocytes and in lung parenchyme (at protein level). Expressed at higher levels than isoform 2 in colon, heart, kidney, lung, cochlea, tongue and muscle, as well as in the inner ear. As to expression, predominantly expressed in brain, liver and spleen.

It is found in the cell membrane. The protein resides in the mitochondrion outer membrane. The enzyme catalyses choline(out) + n H(+)(in) = choline(in) + n H(+)(out). It catalyses the reaction ethanolamine(out) + n H(+)(in) = ethanolamine(in) + n H(+)(out). Its function is as follows. Choline/H+ antiporter, mainly in mitochodria. Also acts as a low-affinity ethanolamine/H+ antiporter, regulating the supply of extracellular ethanolamine (Etn) for the CDP-Etn pathway, redistribute intracellular Etn and balance the CDP-Cho and CDP-Etn arms of the Kennedy pathway. This Mus musculus (Mouse) protein is Choline transporter-like protein 2 (Slc44a2).